The following is a 201-amino-acid chain: Guanylyl cyclase-activating protein 1 (201 aa).

G2 carries the N-myristoyl glycine lipid modification. N3 bears the Deamidated asparagine mark. 4 consecutive EF-hand domains span residues 31 to 49, 51 to 86, 87 to 122, and 131 to 166; these read SGQLTLYEFRQFFGLKNLS, SASQYVEQMFETFDFNKDGYIDFMEYVAALSLVLKG, KVEQKLRWYFKLYDVDGNGCIDRDELLTIIQAIRAI, and TAEEFTDTVFSKIDVNGDGELSLEEFIEGVQKDQML. The Ca(2+) site is built by D64, N66, D68, Y70, E75, D100, D102, N104, C106, E111, D144, N146, D148, E150, and E155.

Homodimer. As to expression, in the retina, it is expressed in rod and cone photoreceptors.

It is found in the membrane. The protein localises to the photoreceptor inner segment. It localises to the cell projection. The protein resides in the cilium. Its subcellular location is the photoreceptor outer segment. Functionally, stimulates retinal guanylyl cyclase when free calcium ions concentration is low and inhibits guanylyl cyclase when free calcium ions concentration is elevated. This Ca(2+)-sensitive regulation of retinal guanylyl cyclase is a key event in recovery of the dark state of rod photoreceptors following light exposure. May be involved in cone photoreceptor light response and recovery of response in bright light. The sequence is that of Guanylyl cyclase-activating protein 1 (GUCA1A) from Homo sapiens (Human).